Reading from the N-terminus, the 71-residue chain is Large ribosomal subunit protein bL31 (71 aa).

The Zn(2+) site is built by Cys16, Cys18, Cys36, and Cys39.

Belongs to the bacterial ribosomal protein bL31 family. Type A subfamily. Part of the 50S ribosomal subunit. The cofactor is Zn(2+).

Functionally, binds the 23S rRNA. This Thermotoga sp. (strain RQ2) protein is Large ribosomal subunit protein bL31.